Here is a 227-residue protein sequence, read N- to C-terminus: MSDKAVLSCRNLGKSYEEGPESVVVLSGLQLELHPGERVAIVGTSGSGKSTLLNLLGGLDTPSEGSVWLAGEELSALGEKARGLLRNRALGFVYQFHHLLPEFTALENVCMPLLIGRTAIPEARQRATALLERVGLGHRLAHKPSELSGGERQRVAIARALINQPGLVMLDEPTGNLDHHTAQGIQDLMRELSTSSRTAFLIVTHDMSLARQMDRILRLEGGRLVEA.

Residues 7 to 227 (LSCRNLGKSY…RLEGGRLVEA (221 aa)) enclose the ABC transporter domain. ATP is bound at residue 43–50 (GTSGSGKS).

Belongs to the ABC transporter superfamily. Lipoprotein translocase (TC 3.A.1.125) family. The complex is composed of two ATP-binding proteins (LolD) and two transmembrane proteins (LolC and LolE).

The protein resides in the cell inner membrane. Its function is as follows. Part of the ABC transporter complex LolCDE involved in the translocation of mature outer membrane-directed lipoproteins, from the inner membrane to the periplasmic chaperone, LolA. Responsible for the formation of the LolA-lipoprotein complex in an ATP-dependent manner. The chain is Lipoprotein-releasing system ATP-binding protein LolD from Pseudomonas syringae pv. tomato (strain ATCC BAA-871 / DC3000).